The primary structure comprises 507 residues: ATP synthase subunit alpha, mitochondrial (507 aa).

171-178 (GDRQTGKT) is an ATP binding site.

Belongs to the ATPase alpha/beta chains family. In terms of assembly, F-type ATPases have 2 components, CF(1) - the catalytic core - and CF(0) - the membrane proton channel. CF(1) has five subunits: alpha(3), beta(3), gamma(1), delta(1), epsilon(1). CF(0) has three main subunits: a, b and c.

The protein localises to the mitochondrion. Its subcellular location is the mitochondrion inner membrane. In terms of biological role, mitochondrial membrane ATP synthase (F(1)F(0) ATP synthase or Complex V) produces ATP from ADP in the presence of a proton gradient across the membrane which is generated by electron transport complexes of the respiratory chain. F-type ATPases consist of two structural domains, F(1) - containing the extramembraneous catalytic core, and F(0) - containing the membrane proton channel, linked together by a central stalk and a peripheral stalk. During catalysis, ATP synthesis in the catalytic domain of F(1) is coupled via a rotary mechanism of the central stalk subunits to proton translocation. Subunits alpha and beta form the catalytic core in F(1). Rotation of the central stalk against the surrounding alpha(3)beta(3) subunits leads to hydrolysis of ATP in three separate catalytic sites on the beta subunits. Subunit alpha does not bear the catalytic high-affinity ATP-binding sites. This chain is ATP synthase subunit alpha, mitochondrial (ATPA), found in Pisum sativum (Garden pea).